Consider the following 205-residue polypeptide: Imidazoleglycerol-phosphate dehydratase (205 aa).

It belongs to the imidazoleglycerol-phosphate dehydratase family.

The protein resides in the cytoplasm. The enzyme catalyses D-erythro-1-(imidazol-4-yl)glycerol 3-phosphate = 3-(imidazol-4-yl)-2-oxopropyl phosphate + H2O. It functions in the pathway amino-acid biosynthesis; L-histidine biosynthesis; L-histidine from 5-phospho-alpha-D-ribose 1-diphosphate: step 6/9. This chain is Imidazoleglycerol-phosphate dehydratase, found in Chloroflexus aurantiacus (strain ATCC 29366 / DSM 635 / J-10-fl).